The following is a 921-amino-acid chain: Isoleucine--tRNA ligase 1 (921 aa).

A 'HIGH' region motif is present at residues 57–67; it reads PYANGDIHMGH. Position 552 (Glu552) interacts with L-isoleucyl-5'-AMP. The 'KMSKS' region motif lies at 593-597; the sequence is KMSKS. Lys596 contacts ATP. Positions 888, 891, 908, and 911 each coordinate Zn(2+).

Belongs to the class-I aminoacyl-tRNA synthetase family. IleS type 1 subfamily. As to quaternary structure, monomer. It depends on Zn(2+) as a cofactor.

Its subcellular location is the cytoplasm. The enzyme catalyses tRNA(Ile) + L-isoleucine + ATP = L-isoleucyl-tRNA(Ile) + AMP + diphosphate. Catalyzes the attachment of isoleucine to tRNA(Ile). As IleRS can inadvertently accommodate and process structurally similar amino acids such as valine, to avoid such errors it has two additional distinct tRNA(Ile)-dependent editing activities. One activity is designated as 'pretransfer' editing and involves the hydrolysis of activated Val-AMP. The other activity is designated 'posttransfer' editing and involves deacylation of mischarged Val-tRNA(Ile). In Bacillus thuringiensis subsp. konkukian (strain 97-27), this protein is Isoleucine--tRNA ligase 1.